We begin with the raw amino-acid sequence, 1522 residues long: ATP-binding cassette sub-family C member 3 (1522 aa).

Over 1 to 32 the chain is Extracellular; that stretch reads MDRLCGSGELGSKFWDSNLTVYTNTPDLTPCF. Residue Asn18 is glycosylated (N-linked (GlcNAc...) asparagine). Residues 33–53 traverse the membrane as a helical segment; the sequence is QNSLLAWVPCIYLWAALPCYL. At 54 to 73 the chain is on the cytoplasmic side; sequence FYLRHHRLGYIVLSCLSRLK. Residues 74 to 94 form a helical membrane-spanning segment; that stretch reads TALGVLLWCISWVDLFYSFHG. At 95-99 the chain is on the extracellular side; the sequence is LVHGS. Residues 100 to 120 form a helical membrane-spanning segment; sequence SPAPVFFITPLLVGITMLLAT. The Cytoplasmic segment spans residues 121–132; the sequence is LLIQYERLRGVR. A helical transmembrane segment spans residues 133 to 153; it reads SSGVLIIFWLLCVICAIIPFR. The Extracellular segment spans residues 154–171; it reads SKILLALAEGKILDPFRF. Residues 172–192 traverse the membrane as a helical segment; that stretch reads TTFYIYFALVLCAFILSCFQE. At 193 to 301 the chain is on the cytoplasmic side; it reads KPPLFSPENL…KTKKPSFLRA (109 aa). Residues 302 to 322 traverse the membrane as a helical segment; sequence LVRTFTSSLLMGACFKLIQDL. The region spanning 310 to 592 is the ABC transmembrane type-1 1 domain; the sequence is LLMGACFKLI…LPQLISGMTQ (283 aa). The Extracellular portion of the chain corresponds to 323 to 347; it reads SPSSTHSCSASSSGLFRPHGPYWWG. A helical transmembrane segment spans residues 348–368; that stretch reads FLLAGLMFVSSTMQTLILHQH. Topologically, residues 369 to 424 are cytoplasmic; that stretch reads YHCIFVMALRIRTAIIGVIYRKALTITNSVKREYTVGEMVNLMSVDAQRFMDVSPF. Residues 425-445 traverse the membrane as a helical segment; that stretch reads INLLWSAPLQVILAIYFLWQI. At 446 to 448 the chain is on the extracellular side; that stretch reads LGP. Residues 449–469 form a helical membrane-spanning segment; the sequence is SALAGVAVIVLLIPLNGAVSM. The Cytoplasmic portion of the chain corresponds to 470 to 531; it reads KMKTYQVQQM…LLRKGAYLQA (62 aa). Residues 532-552 traverse the membrane as a helical segment; that stretch reads ISTFIWVCTPFMVTLITLGVY. Over 553-574 the chain is Extracellular; the sequence is VCVDKNNVLDAEKAFVSLSLFN. A helical membrane pass occupies residues 575–595; the sequence is ILKIPLNLLPQLISGMTQTSV. Residues 596 to 958 are Cytoplasmic-facing; that stretch reads SLKRIQDFLN…VKLSVYWDYA (363 aa). Residues 625 to 849 enclose the ABC transporter 1 domain; the sequence is ITIHNGTFSW…DGSFANFLRN (225 aa). 659–666 contacts ATP; sequence GPVGCGKS. A phosphoserine mark is found at Ser902 and Ser905. The helical transmembrane segment at 959 to 979 threads the bilayer; it reads KSVGLCTTLFICLLYAGQNAV. The ABC transmembrane type-1 2 domain occupies 966-1247; it reads TLFICLLYAG…MIRTLSDLES (282 aa). Over 980 to 1016 the chain is Extracellular; it reads AIGANVWLSAWTNDVEEHGQQNNTSVRLGVYATLGIL. N-linked (GlcNAc...) asparagine glycosylation is found at Asn1001 and Asn1002. A helical membrane pass occupies residues 1017–1037; sequence QGLLVMLSAFTMVVGAIQAAR. The Cytoplasmic segment spans residues 1038–1080; sequence LLHTALLHNQIRAPQSFFDTTPSGRILNRFSKDIYVIHEVLAP. Residues 1081-1101 form a helical membrane-spanning segment; sequence TILMLFNSFYTSISTIVVIVA. Ser1102 is a topological domain (extracellular). Residues 1103-1123 form a helical membrane-spanning segment; it reads TPLFCVVVLPLAVFYGFVQRF. Topologically, residues 1124-1194 are cytoplasmic; the sequence is YVATSRQLKR…ASNRWLGVHV (71 aa). The helical transmembrane segment at 1195–1215 threads the bilayer; sequence EFVGNCVVLFSALFAVIGRNS. Residues 1216–1217 lie on the Extracellular side of the membrane; it reads LN. Residues 1218-1238 traverse the membrane as a helical segment; it reads PGLVGLSVSYALQVTLSLNWM. Residues 1239–1522 lie on the Cytoplasmic side of the membrane; sequence IRTLSDLESN…YGMAKDAGLA (284 aa). The region spanning 1286-1518 is the ABC transporter 2 domain; sequence FRNYSVRYRP…GGIFYGMAKD (233 aa). Residue 1318 to 1325 coordinates ATP; that stretch reads GRTGAGKS.

This sequence belongs to the ABC transporter superfamily. ABCC family. Conjugate transporter (TC 3.A.1.208) subfamily. Expressed in lung, ileum, colon and liver. Higher in liver of Eisai hyperbilirubinemic rats.

The protein resides in the basolateral cell membrane. Its subcellular location is the basal cell membrane. It catalyses the reaction an S-substituted glutathione(in) + ATP + H2O = an S-substituted glutathione(out) + ADP + phosphate + H(+). The catalysed reaction is ATP + H2O + xenobioticSide 1 = ADP + phosphate + xenobioticSide 2.. It carries out the reaction taurocholate(in) + ATP + H2O = taurocholate(out) + ADP + phosphate + H(+). The enzyme catalyses glycocholate(in) + ATP + H2O = glycocholate(out) + ADP + phosphate + H(+). It catalyses the reaction taurolithocholate 3-sulfate(in) + ATP + H2O = taurolithocholate 3-sulfate(out) + ADP + phosphate + H(+). The catalysed reaction is 17beta-estradiol 17-O-(beta-D-glucuronate)(in) + ATP + H2O = 17beta-estradiol 17-O-(beta-D-glucuronate)(out) + ADP + phosphate + H(+). It carries out the reaction dehydroepiandrosterone 3-sulfate(in) + ATP + H2O = dehydroepiandrosterone 3-sulfate(out) + ADP + phosphate + H(+). The enzyme catalyses leukotriene C4(in) + ATP + H2O = leukotriene C4(out) + ADP + phosphate + H(+). It catalyses the reaction (4Z,15Z)-bilirubin IXalpha C8-beta-D-glucuronoside(in) + ATP + H2O = (4Z,15Z)-bilirubin IXalpha C8-beta-D-glucuronoside(out) + ADP + phosphate + H(+). The catalysed reaction is (4Z,15Z)-bilirubin IXalpha C8,C12-beta-D-bisglucuronoside(in) + ATP + H2O = (4Z,15Z)-bilirubin IXalpha C8,C12-beta-D-bisglucuronoside(out) + ADP + phosphate + H(+). It carries out the reaction taurochenodeoxycholate 3-sulfate(in) + ATP + H2O = taurochenodeoxycholate 3-sulfate(out) + ADP + phosphate + H(+). In terms of biological role, ATP-dependent transporter of the ATP-binding cassette (ABC) family that binds and hydrolyzes ATP to enable active transport of various substrates including many drugs, toxicants and endogenous compound across cell membranes. Transports glucuronide conjugates such as bilirubin diglucuronide, estradiol-17-beta-o-glucuronide and GSH conjugates such as leukotriene C4 (LTC4). Transports also various bile salts (taurocholate, glycocholate, taurochenodeoxycholate-3-sulfate, taurolithocholate- 3-sulfate). Does not contribute substantially to bile salt physiology but provides an alternative route for the export of bile acids and glucuronides from cholestatic hepatocytes. May contribute to regulate the transport of organic compounds in testes across the blood-testis-barrier. The sequence is that of ATP-binding cassette sub-family C member 3 (Abcc3) from Rattus norvegicus (Rat).